Here is a 473-residue protein sequence, read N- to C-terminus: GTPase Der (473 aa).

EngA-type G domains follow at residues 3–167 (FTVA…GKDR) and 203–378 (LRVA…RVWN). Residues 9-16 (GRPNVGKS), 56-60 (DTAGL), 119-122 (NKSE), 209-216 (GRPNAGKS), 256-260 (DTAGM), and 321-324 (NKWD) each bind GTP. Residues 379 to 463 (KRISTARLNR…PIRIHFRSPD (85 aa)) form the KH-like domain.

It belongs to the TRAFAC class TrmE-Era-EngA-EngB-Septin-like GTPase superfamily. EngA (Der) GTPase family. In terms of assembly, associates with the 50S ribosomal subunit.

In terms of biological role, GTPase that plays an essential role in the late steps of ribosome biogenesis. The protein is GTPase Der of Rhizobium etli (strain ATCC 51251 / DSM 11541 / JCM 21823 / NBRC 15573 / CFN 42).